The chain runs to 187 residues: Probable chorismate pyruvate-lyase (187 aa).

Substrate contacts are provided by arginine 81, leucine 119, and glutamate 178.

This sequence belongs to the UbiC family.

The protein resides in the cytoplasm. It carries out the reaction chorismate = 4-hydroxybenzoate + pyruvate. Its pathway is cofactor biosynthesis; ubiquinone biosynthesis. Its function is as follows. Removes the pyruvyl group from chorismate, with concomitant aromatization of the ring, to provide 4-hydroxybenzoate (4HB) for the ubiquinone pathway. This Thiobacillus denitrificans (strain ATCC 25259 / T1) protein is Probable chorismate pyruvate-lyase.